A 456-amino-acid polypeptide reads, in one-letter code: Probable glycine dehydrogenase (decarboxylating) subunit 1 (456 aa).

Belongs to the GcvP family. N-terminal subunit subfamily. In terms of assembly, the glycine cleavage system is composed of four proteins: P, T, L and H. In this organism, the P 'protein' is a heterodimer of two subunits.

The catalysed reaction is N(6)-[(R)-lipoyl]-L-lysyl-[glycine-cleavage complex H protein] + glycine + H(+) = N(6)-[(R)-S(8)-aminomethyldihydrolipoyl]-L-lysyl-[glycine-cleavage complex H protein] + CO2. Functionally, the glycine cleavage system catalyzes the degradation of glycine. The P protein binds the alpha-amino group of glycine through its pyridoxal phosphate cofactor; CO(2) is released and the remaining methylamine moiety is then transferred to the lipoamide cofactor of the H protein. This chain is Probable glycine dehydrogenase (decarboxylating) subunit 1, found in Rhizorhabdus wittichii (strain DSM 6014 / CCUG 31198 / JCM 15750 / NBRC 105917 / EY 4224 / RW1) (Sphingomonas wittichii).